The chain runs to 488 residues: Malonate-semialdehyde dehydrogenase (488 aa).

NAD(+)-binding residues include alanine 150, phenylalanine 152, lysine 176, glutamate 179, arginine 180, serine 229, and threonine 251. The active-site Nucleophile is cysteine 284. Glutamate 382 provides a ligand contact to NAD(+).

The protein belongs to the aldehyde dehydrogenase family. IolA subfamily. In terms of assembly, homotetramer.

It catalyses the reaction 3-oxopropanoate + NAD(+) + CoA + H2O = hydrogencarbonate + acetyl-CoA + NADH + H(+). The enzyme catalyses 2-methyl-3-oxopropanoate + NAD(+) + CoA + H2O = propanoyl-CoA + hydrogencarbonate + NADH + H(+). Its pathway is polyol metabolism; myo-inositol degradation into acetyl-CoA; acetyl-CoA from myo-inositol: step 7/7. Its function is as follows. Catalyzes the oxidation of malonate semialdehyde (MSA) and methylmalonate semialdehyde (MMSA) into acetyl-CoA and propanoyl-CoA, respectively. Is involved in a myo-inositol catabolic pathway. Bicarbonate, and not CO2, is the end-product of the enzymatic reaction. This Listeria monocytogenes serotype 4b (strain F2365) protein is Malonate-semialdehyde dehydrogenase.